The following is an 80-amino-acid chain: Exodeoxyribonuclease 7 small subunit (80 aa).

It belongs to the XseB family. As to quaternary structure, heterooligomer composed of large and small subunits.

It is found in the cytoplasm. It carries out the reaction Exonucleolytic cleavage in either 5'- to 3'- or 3'- to 5'-direction to yield nucleoside 5'-phosphates.. Bidirectionally degrades single-stranded DNA into large acid-insoluble oligonucleotides, which are then degraded further into small acid-soluble oligonucleotides. The protein is Exodeoxyribonuclease 7 small subunit of Enterobacter sp. (strain 638).